A 550-amino-acid polypeptide reads, in one-letter code: Mitochondrial distribution and morphology protein 12 (550 aa).

In terms of domain architecture, SMP-LTD spans 1–550 (MSIDLNWETV…VYPSYWTFLV (550 aa)). 3 disordered regions span residues 76 to 97 (SDLA…DRRR), 196 to 386 (GHGH…KLRE), and 466 to 489 (ENEV…GGNG). Residues 83–92 (GSEEDEEEIA) are compositionally biased toward acidic residues. The span at 270–286 (PPFPPSSTGGPSPPPGL) shows a compositional bias: pro residues. The span at 288–305 (KPHHPHHPHHHHAHHAHP) shows a compositional bias: basic residues. The span at 327–344 (PTRDKTTPSHHPDPEDVH) shows a compositional bias: basic and acidic residues. A compositionally biased stretch (polar residues) spans 346–355 (PNTTTTNKQR). The span at 356–371 (STSPATSSPLATSAQE) shows a compositional bias: low complexity.

It belongs to the MDM12 family. In terms of assembly, component of the ER-mitochondria encounter structure (ERMES) or MDM complex, composed of MMM1, MDM10, MDM12 and MDM34. An MMM1 homodimer associates with one molecule of MDM12 on each side in a pairwise head-to-tail manner, and the SMP-LTD domains of MMM1 and MDM12 generate a continuous hydrophobic tunnel for phospholipid trafficking.

Its subcellular location is the mitochondrion outer membrane. It localises to the endoplasmic reticulum membrane. Component of the ERMES/MDM complex, which serves as a molecular tether to connect the endoplasmic reticulum (ER) and mitochondria. Components of this complex are involved in the control of mitochondrial shape and protein biogenesis, and function in nonvesicular lipid trafficking between the ER and mitochondria. MDM12 is required for the interaction of the ER-resident membrane protein MMM1 and the outer mitochondrial membrane-resident beta-barrel protein MDM10. The MDM12-MMM1 subcomplex functions in the major beta-barrel assembly pathway that is responsible for biogenesis of all mitochondrial outer membrane beta-barrel proteins, and acts in a late step after the SAM complex. The MDM10-MDM12-MMM1 subcomplex further acts in the TOM40-specific pathway after the action of the MDM12-MMM1 complex. Essential for establishing and maintaining the structure of mitochondria and maintenance of mtDNA nucleoids. The chain is Mitochondrial distribution and morphology protein 12 from Podospora anserina (strain S / ATCC MYA-4624 / DSM 980 / FGSC 10383) (Pleurage anserina).